A 249-amino-acid polypeptide reads, in one-letter code: Phycobilisome 27.9 kDa linker polypeptide, phycoerythrin-associated, rod (249 aa).

Residues 2–166 (ASQTILELWP…LDRGPAQIDS (165 aa)) enclose the PBS-linker domain. The CpcD-like domain maps to 198–248 (EKRFKILVQGSKFDSPRRISTTEYIVPASKMTPQIQRINRTSGKIVSITEI).

It belongs to the phycobilisome linker protein family. As to quaternary structure, the phycobilisome is a hemidiscoidal structure that is composed of two distinct substructures: a core complex and six rods radiating from the core.

The protein resides in the cellular thylakoid membrane. Rod linker protein, associated with phycoerythrin. Linker polypeptides determine the state of aggregation and the location of the disk-shaped phycobiliprotein units within the phycobilisome and modulate their spectroscopic properties in order to mediate a directed and optimal energy transfer. The sequence is that of Phycobilisome 27.9 kDa linker polypeptide, phycoerythrin-associated, rod (cpeD) from Microchaete diplosiphon (Fremyella diplosiphon).